Here is a 1373-residue protein sequence, read N- to C-terminus: MKSGSGGGSPTSLWGLVFLSAALSLWPTSGEICGPGIDIRNDYQQLKRLENCTVIEGFLHILLISKAEDYRSYRFPKLTVITEYLLLFRVAGLESLGDLFPNLTVIRGWKLFYNYALVIFEMTNLKDIGLYNLRNITRGAIRIEKNADLCYLSTIDWSLILDAVSNNYIVGNKPPKECGDLCPGTLEEKPMCEKTTINNEYNYRCWTTNRCQKMCPSVCGKRACTENNECCHPECLGSCHTPDDNTTCVACRHYYYKGVCVPACPPGTYRFEGWRCVDRDFCANIPNAESSDSDGFVIHDDECMQECPSGFIRNSTQSMYCIPCEGPCPKVCGDEEKKTKTIDSVTSAQMLQGCTILKGNLLINIRRGNNIASELENFMGLIEVVTGYVKIRHSHALVSLSFLKNLRLILGEEQLEGNYSFYVLDNQNLQQLWDWNHRNLTVRSGKMYFAFNPKLCVSEIYRMEEVTGTKGRQSKGDINTRNNGERASCESDVLRFTSTTTWKNRIIITWHRYRPPDYRDLISFTVYYKEAPFKNVTEYDGQDACGSNSWNMVDVDLPPNKEGEPGILLHGLKPWTQYAVYVKAVTLTMVENDHIRGAKSEILYIRTNASVPSIPLDVLSASNSSSQLIVKWNPPTLPNGNLSYYIVRWQRQPQDGYLYRHNYCSKDKIPIRKYADGTIDVEEVTENPKTEVCGGDKGPCCACPKTEAEKQAEKEEAEYRKVFENFLHNSIFVPRPERRRRDVMQVANTTMSSRSRNTTVADTYNITDPEEFETEYPFFESRVDNKERTVISNLRPFTLYRIDIHSCNHEAEKLGCSASNFVFARTMPAEGADDIPGPVTWEPRPENSIFLKWPEPENPNGLILMYEIKYGSQVEDQRECVSRQEYRKYGGAKLNRLNPGNYTARIQATSLSGNGSWTDPVFFYVPAKTTYENFMHLIIALPVAILLIVGGLVIMLYVFHRKRNNSRLGNGVLYASVNPEYFSAADVYVPDEWEVAREKITMNRELGQGSFGMVYEGVAKGVVKDEPETRVAIKTVNEAASMRERIEFLNEASVMKEFNCHHVVRLLGVVSQGQPTLVIMELMTRGDLKSYLRSLRPEVEQNNLVLIPPSLSKMIQMAGEIADGMAYLNANKFVHRDLAARNCMVAEDFTVKIGDFGMTRDIYETDYYRKGGKGLLPVRWMSPESLKDGVFTTHSDVWSFGVVLWEIATLAEQPYQGLSNEQVLRFVMEGGLLDKPDNCPDMLFELMRMCWQYNPKMRPSFLEIIGSIKDEMEPSFQEVSFYYSEENKPPEPEELEMELEMEPENMESVPLDPSASSASLPLPERHSGHKAENGPGPGVLVLRASFDERQPYAHMNGGRANERALPLPQSSTC.

The signal sequence occupies residues 1-30; sequence MKSGSGGGSPTSLWGLVFLSAALSLWPTSG. A disulfide bridge links Cys33 with Cys52. 3 N-linked (GlcNAc...) asparagine glycosylation sites follow: Asn51, Asn102, and Asn135. Disulfide bonds link Cys150/Cys178, Cys182/Cys205, Cys192/Cys211, Cys215/Cys224, Cys219/Cys230, Cys231/Cys239, Cys235/Cys248, Cys251/Cys260, Cys264/Cys276, Cys282/Cys303, Cys307/Cys321, Cys324/Cys328, and Cys332/Cys354. Asn245 carries an N-linked (GlcNAc...) asparagine glycan. Asn314 carries an N-linked (GlcNAc...) asparagine glycan. Asn418 and Asn439 each carry an N-linked (GlcNAc...) asparagine glycan. Cys456 and Cys489 form a disulfide bridge. 4 consecutive Fibronectin type-III domains span residues 490 to 610, 611 to 709, 735 to 829, and 835 to 928; these read ESDV…TNAS, VPSI…TEAE, RPER…TMPA, and IPGP…VPAK. N-linked (GlcNAc...) asparagine glycans are attached at residues Asn535, Asn608, Asn623, Asn641, Asn748, Asn757, Asn765, Asn901, and Asn914. Residues 742 to 936 are Extracellular-facing; that stretch reads DVMQVANTTM…AKTTYENFMH (195 aa). The chain crosses the membrane as a helical span at residues 937 to 960; sequence LIIALPVAILLIVGGLVIMLYVFH. Over 961–1373 the chain is Cytoplasmic; sequence RKRNNSRLGN…ALPLPQSSTC (413 aa). An IRS1- and SHC1-binding motif is present at residues 978–981; sequence NPEY. Tyr981 carries the phosphotyrosine modification. The Protein kinase domain occupies 1000–1276; it reads ITMNRELGQG…SIKDEMEPSF (277 aa). Residues 1006–1014 and Lys1034 each bind ATP; that span reads LGQGSFGMV. Asp1137 (proton acceptor) is an active-site residue. Residues Tyr1163, Tyr1167, and Tyr1168 each carry the phosphotyrosine; by autocatalysis modification. Glycyl lysine isopeptide (Lys-Gly) (interchain with G-Cter in ubiquitin) cross-links involve residues Lys1170 and Lys1173. Ser1280 is modified (phosphoserine; by GSK3-beta). Residues 1283 to 1373 are disordered; that stretch reads YSEENKPPEP…ALPLPQSSTC (91 aa). At Ser1284 the chain carries Phosphoserine. Residues 1292 to 1305 show a composition bias toward acidic residues; the sequence is PEELEMELEMEPEN. Low complexity predominate over residues 1306 to 1322; it reads MESVPLDPSASSASLPL. Positions 1323–1332 are enriched in basic and acidic residues; it reads PERHSGHKAE.

This sequence belongs to the protein kinase superfamily. Tyr protein kinase family. Insulin receptor subfamily. In terms of assembly, tetramer of 2 alpha and 2 beta chains linked by disulfide bonds. The alpha chains contribute to the formation of the ligand-binding domain, while the beta chain carries the kinase domain. Interacts with PIK3R1 and with the PTB/PID domains of IRS1 and SHC1 in vitro when autophosphorylated on tyrosine residues. Forms a hybrid receptor with INSR, the hybrid is a tetramer consisting of 1 alpha chain and 1 beta chain of INSR and 1 alpha chain and 1 beta chain of IGF1R. Interacts with ARRB1 and ARRB2. Interacts with GRB10. Interacts with RACK1. Interacts with SOCS1, SOCS2 and SOCS3. Interacts with 14-3-3 proteins. Interacts with NMD2. Interacts with MAP3K5. Interacts with STAT3. Found in a ternary complex with IGF1 and ITGAV:ITGB3 or ITGA6:ITGB4. Interacts (nascent precursor form) with ZFAND2B. Post-translationally, autophosphorylated on tyrosine residues in response to ligand binding. Autophosphorylation occurs in trans, i.e. one subunit of the dimeric receptor phosphorylates tyrosine residues on the other subunit. Autophosphorylation occurs in a sequential manner; Tyr-1167 is predominantly phosphorylated first, followed by phosphorylation of Tyr-1163 and Tyr-1168. While every single phosphorylation increases kinase activity, all three tyrosine residues in the kinase activation loop (Tyr-1163, Tyr-1167 and Tyr-1168) have to be phosphorylated for optimal activity. Can be autophosphorylated at additional tyrosine residues (in vitro). Autophosphorylated is followed by phosphorylation of juxtamembrane tyrosines and C-terminal serines. May also be phosphorylated at Tyr-1163 and Tyr-1168 by mTORC2. Phosphorylation of Tyr-981 is required for IRS1- and SHC1-binding. Phosphorylation of Ser-1280 by GSK-3beta restrains kinase activity and promotes cell surface expression, it requires a priming phosphorylation at Ser-1284. Dephosphorylated by PTPN1. Polyubiquitinated at Lys-1170 and Lys-1173 through both 'Lys-48' and 'Lys-29' linkages, promoting receptor endocytosis and subsequent degradation by the proteasome. Ubiquitination is facilitated by pre-existing phosphorylation. In terms of processing, sumoylated with SUMO1. Post-translationally, controlled by regulated intramembrane proteolysis (RIP). Undergoes metalloprotease-dependent constitutive ectodomain shedding to produce a membrane-anchored 52 kDa C-Terminal fragment which is further processed by presenilin gamma-secretase to yield an intracellular 50 kDa fragment.

It is found in the cell membrane. It catalyses the reaction L-tyrosyl-[protein] + ATP = O-phospho-L-tyrosyl-[protein] + ADP + H(+). Its activity is regulated as follows. Activated by autophosphorylation at Tyr-1163, Tyr-1167 and Tyr-1168 on the kinase activation loop; phosphorylation at all three tyrosine residues is required for optimal kinase activity. Inhibited by MSC1609119A-1, BMS-754807, PQIP, benzimidazole pyridinone, isoquinolinedione, bis-azaindole, 3-cyanoquinoline, 2,4-bis-arylamino-1,3-pyrimidine, pyrrolopyrimidine, pyrrole-5-carboxaldehyde, picropodophyllin (PPP), tyrphostin derivatives. While most inhibitors bind to the ATP binding pocket, MSC1609119A-1 functions as allosteric inhibitor and binds close to the DFG motif and the activation loop. Functionally, receptor tyrosine kinase which mediates actions of insulin-like growth factor 1 (IGF1). Binds IGF1 with high affinity and IGF2 and insulin (INS) with a lower affinity. The activated IGF1R is involved in cell growth and survival control. IGF1R is crucial for tumor transformation and survival of malignant cell. Ligand binding activates the receptor kinase, leading to receptor autophosphorylation, and tyrosines phosphorylation of multiple substrates, that function as signaling adapter proteins including, the insulin-receptor substrates (IRS1/2), Shc and 14-3-3 proteins. Phosphorylation of IRSs proteins lead to the activation of two main signaling pathways: the PI3K-AKT/PKB pathway and the Ras-MAPK pathway. The result of activating the MAPK pathway is increased cellular proliferation, whereas activating the PI3K pathway inhibits apoptosis and stimulates protein synthesis. Phosphorylated IRS1 can activate the 85 kDa regulatory subunit of PI3K (PIK3R1), leading to activation of several downstream substrates, including protein AKT/PKB. AKT phosphorylation, in turn, enhances protein synthesis through mTOR activation and triggers the antiapoptotic effects of IGFIR through phosphorylation and inactivation of BAD. In parallel to PI3K-driven signaling, recruitment of Grb2/SOS by phosphorylated IRS1 or Shc leads to recruitment of Ras and activation of the ras-MAPK pathway. In addition to these two main signaling pathways IGF1R signals also through the Janus kinase/signal transducer and activator of transcription pathway (JAK/STAT). Phosphorylation of JAK proteins can lead to phosphorylation/activation of signal transducers and activators of transcription (STAT) proteins. In particular activation of STAT3, may be essential for the transforming activity of IGF1R. The JAK/STAT pathway activates gene transcription and may be responsible for the transforming activity. JNK kinases can also be activated by the IGF1R. IGF1 exerts inhibiting activities on JNK activation via phosphorylation and inhibition of MAP3K5/ASK1, which is able to directly associate with the IGF1R. When present in a hybrid receptor with INSR, binds IGF1. This chain is Insulin-like growth factor 1 receptor (Igf1r), found in Mus musculus (Mouse).